The sequence spans 585 residues: A-type ATP synthase subunit A (585 aa).

231–238 (GPFGSGKT) is an ATP binding site.

It belongs to the ATPase alpha/beta chains family. Has multiple subunits with at least A(3), B(3), C, D, E, F, H, I and proteolipid K(x).

The protein resides in the cell membrane. It catalyses the reaction ATP + H2O + 4 H(+)(in) = ADP + phosphate + 5 H(+)(out). Produces ATP from ADP in the presence of a proton gradient across the membrane. The archaeal alpha chain is a catalytic subunit. In terms of biological role, component of the A-type ATP synthase that produces ATP from ADP in the presence of a proton gradient across the membrane. The A chain is the catalytic subunit. The chain is A-type ATP synthase subunit A from Thermococcus kodakarensis (strain ATCC BAA-918 / JCM 12380 / KOD1) (Pyrococcus kodakaraensis (strain KOD1)).